The following is a 252-amino-acid chain: Membrane protein insertase YidC (252 aa).

Residues 1–19 (MKKVLWIIIIILMVGALAG) form the signal peptide. Cysteine 20 is lipidated: N-palmitoyl cysteine. A lipid anchor (S-diacylglycerol cysteine) is attached at cysteine 20. 6 helical membrane passes run 34-54 (IWNH…ADLL), 58-78 (FGLS…PLMI), 131-151 (MAGC…YFAI), 162-182 (FLWF…VAGI), 201-221 (VIIY…PSAL), and 223-243 (LYWV…VVRF).

Belongs to the OXA1/ALB3/YidC family. Type 2 subfamily.

It localises to the cell membrane. Required for the insertion and/or proper folding and/or complex formation of integral membrane proteins into the membrane. Involved in integration of membrane proteins that insert both dependently and independently of the Sec translocase complex, as well as at least some lipoproteins. The sequence is that of Membrane protein insertase YidC from Alkalihalophilus pseudofirmus (strain ATCC BAA-2126 / JCM 17055 / OF4) (Bacillus pseudofirmus).